Reading from the N-terminus, the 655-residue chain is Protein nipi-3 (655 aa).

The segment at 1–35 (MARTKCKTKTVANPRTGVRKTAKDLSEPVRQDAVS) is disordered. Residues 21–35 (TAKDLSEPVRQDAVS) are compositionally biased toward basic and acidic residues. One can recognise a Protein kinase domain in the interval 200–470 (IGIFVIYGTG…NQVNGDFPEI (271 aa)). ATP is bound by residues 206 to 214 (YGTGLVTRA) and K235.

This sequence belongs to the protein kinase superfamily. CAMK Ser/Thr protein kinase family. As to quaternary structure, may interact with transcription factor cebp-1 (via N-terminus). As to expression, expressed in epidermis, pharynx, intestine, a subset of head neurons and motoneurons.

It localises to the nucleus. Functionally, adapter protein that regulates different signaling pathways. Required for larval development and viability. Involved in negatively modulating pmk-1 p38/MAPK signaling. Involved in innate immunity, acting either in a manner dependent upon, or independent of, the pmk-1 or pmk-3 p38/MAPK pathways. Has a protective role in response to infection by the Gram-negative bacterium P.aeruginosa, acting by negatively modulating expression of cebp-1, and regulating the pmk-1 p38/MAPK pathway, leading to activation of transcription factor skn-1. Required to prevent P.aeruginosa toxin ToxA-mediated lethality, probably acting via modulating the effects of translational inhibition caused by the toxin. By regulating the up-regulation in the epidermis of antimicrobial peptides nlp-29 and nlp-31, plays a role in resistance to fungal infection. In Caenorhabditis elegans, this protein is Protein nipi-3.